The primary structure comprises 205 residues: MNGFTNKDFETFNINGLDERMEAIQTRIQPKFQQIGESLAEDLSKKTNNELYLHIAKHARRTVNPPNDTWLAIADNKRGYKKHPHFQVGVFDDHVFIWLALIYELPNKSKIASAYINHFDEVKNLPTSYVVSLDHTKKDAISLTDLNKSHLERFRDVKKAEFLIGKHIEKGDPILANGDELYQFIMDVFEQLLPLYQLAIDSRDE.

This sequence belongs to the UPF0637 family.

In Oceanobacillus iheyensis (strain DSM 14371 / CIP 107618 / JCM 11309 / KCTC 3954 / HTE831), this protein is UPF0637 protein OB1420.